Here is a 133-residue protein sequence, read N- to C-terminus: UPF0146 protein MTH_1000 (133 aa).

It belongs to the UPF0146 family.

This is UPF0146 protein MTH_1000 from Methanothermobacter thermautotrophicus (strain ATCC 29096 / DSM 1053 / JCM 10044 / NBRC 100330 / Delta H) (Methanobacterium thermoautotrophicum).